We begin with the raw amino-acid sequence, 249 residues long: Ribonuclease PH (249 aa).

Phosphate is bound by residues Arg-86 and Gly-124–Arg-126.

It belongs to the RNase PH family. As to quaternary structure, homohexameric ring arranged as a trimer of dimers.

The enzyme catalyses tRNA(n+1) + phosphate = tRNA(n) + a ribonucleoside 5'-diphosphate. Functionally, phosphorolytic 3'-5' exoribonuclease that plays an important role in tRNA 3'-end maturation. Removes nucleotide residues following the 3'-CCA terminus of tRNAs; can also add nucleotides to the ends of RNA molecules by using nucleoside diphosphates as substrates, but this may not be physiologically important. Probably plays a role in initiation of 16S rRNA degradation (leading to ribosome degradation) during starvation. In Clostridium botulinum (strain Alaska E43 / Type E3), this protein is Ribonuclease PH.